A 363-amino-acid polypeptide reads, in one-letter code: UDP-N-acetylglucosamine--N-acetylmuramyl-(pentapeptide) pyrophosphoryl-undecaprenol N-acetylglucosamine transferase (363 aa).

Residues 10 to 12 (TGG), asparagine 124, serine 195, isoleucine 249, and glutamine 294 each bind UDP-N-acetyl-alpha-D-glucosamine.

The protein belongs to the glycosyltransferase 28 family. MurG subfamily.

The protein localises to the cell membrane. The enzyme catalyses Mur2Ac(oyl-L-Ala-gamma-D-Glu-L-Lys-D-Ala-D-Ala)-di-trans,octa-cis-undecaprenyl diphosphate + UDP-N-acetyl-alpha-D-glucosamine = beta-D-GlcNAc-(1-&gt;4)-Mur2Ac(oyl-L-Ala-gamma-D-Glu-L-Lys-D-Ala-D-Ala)-di-trans,octa-cis-undecaprenyl diphosphate + UDP + H(+). It functions in the pathway cell wall biogenesis; peptidoglycan biosynthesis. In terms of biological role, cell wall formation. Catalyzes the transfer of a GlcNAc subunit on undecaprenyl-pyrophosphoryl-MurNAc-pentapeptide (lipid intermediate I) to form undecaprenyl-pyrophosphoryl-MurNAc-(pentapeptide)GlcNAc (lipid intermediate II). The sequence is that of UDP-N-acetylglucosamine--N-acetylmuramyl-(pentapeptide) pyrophosphoryl-undecaprenol N-acetylglucosamine transferase from Leuconostoc mesenteroides subsp. mesenteroides (strain ATCC 8293 / DSM 20343 / BCRC 11652 / CCM 1803 / JCM 6124 / NCDO 523 / NBRC 100496 / NCIMB 8023 / NCTC 12954 / NRRL B-1118 / 37Y).